The primary structure comprises 87 residues: UPF0335 protein Meso_3367 (87 aa).

This sequence belongs to the UPF0335 family.

This Chelativorans sp. (strain BNC1) protein is UPF0335 protein Meso_3367.